A 528-amino-acid chain; its full sequence is Na(+)/H(+) antiporter NhaB (528 aa).

Helical transmembrane passes span I10–I30, Y63–A83, V96–F116, V131–I165, L204–P224, F240–L260, V305–V325, L359–I379, L391–G411, A449–I469, and M476–E496.

It belongs to the NhaB Na(+)/H(+) (TC 2.A.34) antiporter family.

Its subcellular location is the cell inner membrane. It catalyses the reaction 2 Na(+)(in) + 3 H(+)(out) = 2 Na(+)(out) + 3 H(+)(in). Its function is as follows. Na(+)/H(+) antiporter that extrudes sodium in exchange for external protons. The sequence is that of Na(+)/H(+) antiporter NhaB from Shewanella sp. (strain W3-18-1).